Consider the following 110-residue polypeptide: UPF0102 protein Abu_0255 (110 aa).

This sequence belongs to the UPF0102 family.

In Aliarcobacter butzleri (strain RM4018) (Arcobacter butzleri), this protein is UPF0102 protein Abu_0255.